Reading from the N-terminus, the 243-residue chain is UPF0173 metal-dependent hydrolase Caur_2542 (243 aa).

This sequence belongs to the UPF0173 family.

This is UPF0173 metal-dependent hydrolase Caur_2542 from Chloroflexus aurantiacus (strain ATCC 29366 / DSM 635 / J-10-fl).